The following is a 170-amino-acid chain: MKTQRDGPSLGRWSLVLLLLGLTMPLAITAQVLSYQEAVLRAVDGLNQRSLDANLYRLLNLDPRPTLDGDPDTPKPVSFTVKETVCPRTIQRSPEECDFKKDGLVKRCVGTVILNQARDSFDISCDKDERKVARLGGFLQKAREKIARGFKKIGQKINDFLGKLAPRTEA.

Positions Met-1 to Ala-30 are cleaved as a signal peptide. Residues Gln-31–Lys-131 constitute a propeptide, cathelin-like domain (CLD). Cystine bridges form between Cys-86–Cys-97 and Cys-108–Cys-125. The tract at residues Phe-150 to Gly-162 is active core.

It belongs to the cathelicidin family. Monomer, homodimer or homotrimer (in vitro). Oligomerizes as tetra- or hexamer in solution (in vitro). Proteolytically cleaved by proteinase PRTN3 into antibacterial peptide LL-37. Proteolytically cleaved by cathepsin CTSG and neutrophil elastase ELANE. In terms of processing, resistant to proteolytic degradation in solution, and when bound to both zwitterionic (mimicking mammalian membranes) and negatively charged membranes (mimicking bacterial membranes). Post-translationally, after secretion onto the skin surface, the CAMP gene product is processed by a serine protease-dependent mechanism into multiple novel antimicrobial peptides distinct from and shorter than cathelicidin LL-37. These peptides show enhanced antimicrobial action, acquiring the ability to kill skin pathogens such as S.aureus, E.coli and C.albicans. These peptides have lost the ability to stimulate CXCL8/IL8 release from keratinocytes. The peptides act synergistically, killing bacteria at lower concentrations when present together, and maintain activity at increased salt condition.

The protein resides in the secreted. The protein localises to the vesicle. In terms of biological role, antimicrobial protein that is an integral component of the innate immune system. Binds to bacterial lipopolysaccharides (LPS). Acts via neutrophil N-formyl peptide receptors to enhance the release of CXCL2. Postsecretory processing generates multiple cathelicidin antimicrobial peptides with various lengths which act as a topical antimicrobial defense in sweat on skin. The unprocessed precursor form, cathelicidin antimicrobial peptide, inhibits the growth of Gram-negative E.coli and E.aerogenes with efficiencies comparable to that of the mature peptide LL-37 (in vitro). Its function is as follows. Antimicrobial peptide that is an integral component of the innate immune system. Binds to bacterial lipopolysaccharides (LPS). Causes membrane permeabilization by forming transmembrane pores (in vitro). Causes lysis of E.coli. Exhibits antimicrobial activity against Gram-negative bacteria such as P.aeruginosa, S.typhimurium, E.aerogenes, E.coli and P.syringae, Gram-positive bacteria such as L.monocytogenes, S.epidermidis, S.pyogenes and S.aureus, as well as vancomycin-resistant enterococci (in vitro). Exhibits antimicrobial activity against methicillin-resistant S.aureus, P.mirabilis, and C.albicans in low-salt media, but not in media containing 100 mM NaCl (in vitro). Forms chiral supramolecular assemblies with quinolone signal (PQS) molecules of P.aeruginosa, which may lead to interference of bacterial quorum signaling and perturbance of bacterial biofilm formation. May form supramolecular fiber-like assemblies on bacterial membranes. Induces cytokine and chemokine producation as well as TNF/TNFA and CSF2/GMCSF production in normal human keratinocytes. Exhibits hemolytic activity against red blood cells. Exhibits antimicrobial activity against E.coli and B.megaterium (in vitro). This Cebus capucinus (White-faced sapajou) protein is Cathelicidin antimicrobial peptide.